A 426-amino-acid polypeptide reads, in one-letter code: Adenylosuccinate synthetase (426 aa).

GTP is bound by residues 12-18 (GDEGKGK) and 40-42 (GHT). Asp13 acts as the Proton acceptor in catalysis. Asp13 and Gly40 together coordinate Mg(2+). Residues 13-16 (DEGK), 38-41 (NAGH), Thr125, Arg139, Gln221, Thr236, and Arg300 each bind IMP. Catalysis depends on His41, which acts as the Proton donor. 296 to 302 (TTTGRPR) is a binding site for substrate. GTP contacts are provided by residues Arg302, 328–330 (KLD), and 410–412 (AVG).

This sequence belongs to the adenylosuccinate synthetase family. Homodimer. It depends on Mg(2+) as a cofactor.

The protein localises to the cytoplasm. The catalysed reaction is IMP + L-aspartate + GTP = N(6)-(1,2-dicarboxyethyl)-AMP + GDP + phosphate + 2 H(+). It participates in purine metabolism; AMP biosynthesis via de novo pathway; AMP from IMP: step 1/2. Its function is as follows. Plays an important role in the de novo pathway of purine nucleotide biosynthesis. Catalyzes the first committed step in the biosynthesis of AMP from IMP. The chain is Adenylosuccinate synthetase from Syntrophomonas wolfei subsp. wolfei (strain DSM 2245B / Goettingen).